Reading from the N-terminus, the 194-residue chain is UPF0301 protein FTH_1193 (194 aa).

Belongs to the UPF0301 (AlgH) family.

This Francisella tularensis subsp. holarctica (strain OSU18) protein is UPF0301 protein FTH_1193.